The chain runs to 339 residues: O-methyltransferase 7 (339 aa).

5 residues coordinate S-adenosyl-L-methionine: G186, D209, S232, F233, and K246. H250 serves as the catalytic Proton acceptor.

The protein belongs to the class I-like SAM-binding methyltransferase superfamily. Cation-independent O-methyltransferase family. COMT subfamily.

It carries out the reaction (3,5-dichloro-2,4,6-trihydroxyphenyl)hexan-1-one + S-adenosyl-L-methionine = 1-(3,5-dichloro-2,6-dihydroxy-4-methoxyphenyl)hexan-1-one + S-adenosyl-L-homocysteine + H(+). This chain is O-methyltransferase 7 (omt7), found in Dictyostelium discoideum (Social amoeba).